The primary structure comprises 720 residues: Nucleoporin NUP2 (720 aa).

The disordered stretch occupies residues 1 to 33 (MAKRVADAQIQRETYDSNESDDDVTPSTKVASS). Serine 17 and serine 20 each carry phosphoserine. Residues 35-50 (VMNRRKIAMPKRRMAF) are interaction with SRP1 NLS binding site 1. Disordered regions lie at residues 52–92 (PFGS…SNSR) and 136–278 (KSIE…VDNN). Residues 67–69 (FSF) form an FXF 1 repeat. The span at 81-92 (VDNSPTTESNSR) shows a compositional bias: polar residues. Serine 137 is subject to Phosphoserine. Positions 147 to 159 (NDAKPAKVEDVQK) are enriched in basic and acidic residues. The residue at position 165 (serine 165) is a Phosphoserine. Residues 189–192 (FSFG) form an FXFG 1 repeat. Basic and acidic residues predominate over residues 193–202 (PKKENRKKDE). Serine 203 and serine 205 each carry phosphoserine. 2 FXF repeats span residues 216 to 218 (FKF) and 247 to 249 (FSF). Residues 243 to 278 (NAKPFSFSSATSTTEQTKSKNPLSLTEATKTNVDNN) are compositionally biased toward polar residues. FXFG repeat units lie at residues 285–288 (FTFG), 302–305 (FVFG), and 318–321 (FTFG). Residues 315–324 (KSSFTFGSTT) are compositionally biased toward polar residues. A disordered region spans residues 315–604 (KSSFTFGSTT…KPINLQNGEE (290 aa)). Positions 345 to 360 (SNDSNPSFSFSIPSKN) are enriched in low complexity. Phosphoserine is present on residues serine 348 and serine 351. The stretch at 352 to 354 (FSF) is one FXF 4 repeat. Residue threonine 361 is modified to Phosphothreonine. Residues 369–372 (FSFG) form an FXFG 5 repeat. The span at 373 to 384 (VPNSSKNETSKP) shows a compositional bias: polar residues. One copy of the FXFG 6 repeat lies at 386–389 (FSFG). Basic and acidic residues predominate over residues 424 to 435 (TEKEKESKKDSK). FXFG repeat units follow at residues 438–441 (FSFG), 474–477 (FSFG), 493–496 (FTFG), 511–514 (FSFG), and 524–527 (FSFG). A compositionally biased stretch (low complexity) spans 479–495 (NTNTTKTADTKAPTFTF). Residues 513–533 (FGTSQPNNTPSFSFGKTTANL) show a composition bias toward polar residues. The span at 534–548 (PANSSTSPAPSIPST) shows a compositional bias: low complexity. Residues 550-552 (FKF) form an FXF 5 repeat. Residues 574-584 (TEATGNESQDA) show a composition bias toward polar residues. Residue serine 581 is modified to Phosphoserine. The RanBD1 domain maps to 583-720 (DATKVDATPE…AIEDAKKEMK (138 aa)). A Phosphothreonine modification is found at threonine 590.

As to quaternary structure, component of the nuclear pore complex (NPC). NPC constitutes the exclusive means of nucleocytoplasmic transport. NPCs allow the passive diffusion of ions and small molecules and the active, nuclear transport receptor-mediated bidirectional transport of macromolecules such as proteins, RNAs, ribonucleoparticles (RNPs), and ribosomal subunits across the nuclear envelope. Due to its 8-fold rotational symmetry, all subunits are present with 8 copies or multiples thereof. Binds to the nuclear basket of the NPC through NUP60 in a (GSP1, GSP2) GTPase-GTP-dependent manner. Interacts through its FG repeats with nuclear transport factors. Interacts with KAP122.

The protein localises to the nucleus. Its subcellular location is the nuclear pore complex. It localises to the nucleus membrane. Functionally, functions as a component of the nuclear pore complex (NPC). NPC components, collectively referred to as nucleoporins (NUPs), can play the role of both NPC structural components and of docking or interaction partners for transiently associated nuclear transport factors. Active directional transport is assured by both, a Phe-Gly (FG) repeat affinity gradient for these transport factors across the NPC and a transport cofactor concentration gradient across the nuclear envelope (GSP1 and GSP2 GTPases associated predominantly with GTP in the nucleus, with GDP in the cytoplasm). As one of the FG repeat nucleoporins NUP2 is involved in interactions with and guidance of nuclear transport receptors such as SRP1-KAP95 (importin alpha and beta) through the NPC. Like the closely related NUP1 it also plays an important role in disassembling and recycling SRP1-KAP95 to the cytoplasm after nuclear import. Upon entry of the heterotrimeric SRP1-KAP95-cargo complex in the nucleus, NUP2 binds through its N-terminus to the SRP1 nuclear localization signal (NLS) binding site, thus accelerating the release of the NLS-cargo. SRP1 in turn is released from NUP2 by binding of the GSP1-GTP associated export factor CSE1. NUP2 may also have a chromatin boundary/insulator activity through indirect interaction with genomic DNA via CSE1 and blocking of heterochromatin spreading. The polypeptide is Nucleoporin NUP2 (NUP2) (Saccharomyces cerevisiae (strain ATCC 204508 / S288c) (Baker's yeast)).